We begin with the raw amino-acid sequence, 921 residues long: Isoleucine--tRNA ligase (921 aa).

Positions 57 to 67 match the 'HIGH' region motif; it reads PYANGNIHVGT. Glutamate 551 is a binding site for L-isoleucyl-5'-AMP. Positions 592 to 596 match the 'KMSKS' region motif; the sequence is KMSKS. Lysine 595 serves as a coordination point for ATP. Residues cysteine 885, cysteine 888, cysteine 905, and cysteine 908 each coordinate Zn(2+).

Belongs to the class-I aminoacyl-tRNA synthetase family. IleS type 1 subfamily. As to quaternary structure, monomer. Zn(2+) is required as a cofactor.

The protein resides in the cytoplasm. It carries out the reaction tRNA(Ile) + L-isoleucine + ATP = L-isoleucyl-tRNA(Ile) + AMP + diphosphate. Catalyzes the attachment of isoleucine to tRNA(Ile). As IleRS can inadvertently accommodate and process structurally similar amino acids such as valine, to avoid such errors it has two additional distinct tRNA(Ile)-dependent editing activities. One activity is designated as 'pretransfer' editing and involves the hydrolysis of activated Val-AMP. The other activity is designated 'posttransfer' editing and involves deacylation of mischarged Val-tRNA(Ile). This is Isoleucine--tRNA ligase from Kosmotoga olearia (strain ATCC BAA-1733 / DSM 21960 / TBF 19.5.1).